Reading from the N-terminus, the 90-residue chain is Probable Fe(2+)-trafficking protein (90 aa).

This sequence belongs to the Fe(2+)-trafficking protein family.

Functionally, could be a mediator in iron transactions between iron acquisition and iron-requiring processes, such as synthesis and/or repair of Fe-S clusters in biosynthetic enzymes. The sequence is that of Probable Fe(2+)-trafficking protein from Hydrogenovibrio crunogenus (strain DSM 25203 / XCL-2) (Thiomicrospira crunogena).